Here is a 594-residue protein sequence, read N- to C-terminus: Arginine--tRNA ligase (594 aa).

The short motif at A139–H149 is the 'HIGH' region element.

This sequence belongs to the class-I aminoacyl-tRNA synthetase family. Monomer.

The protein localises to the cytoplasm. The enzyme catalyses tRNA(Arg) + L-arginine + ATP = L-arginyl-tRNA(Arg) + AMP + diphosphate. The protein is Arginine--tRNA ligase of Burkholderia thailandensis (strain ATCC 700388 / DSM 13276 / CCUG 48851 / CIP 106301 / E264).